Consider the following 79-residue polypeptide: MNKTIEYQKEFLKENNQLLNIPIKKNILKEILQNDEQDTIITNCITKEVSINLDLIKNPKVLYSIYIMVVEYLKSINIT.

Belongs to the asfivirus D79L family.

This is an uncharacterized protein from Ornithodoros (relapsing fever ticks).